The following is a 154-amino-acid chain: Hemiasterlin resistant protein 1 (154 aa).

2 disordered regions span residues 1-64 and 86-109; these read MVRR…PGLM and GMFT…PAGA. Composition is skewed to low complexity over residues 7–28, 48–57, and 96–109; these read ASPS…SSFA, TPMGAPMGAP, and AEQA…PAGA. The CHCH domain maps to 116 to 154; that stretch reads SQPCEFEWRQFVDCAQNQSDVSLCNGFNDIFKQCKARYA. Short sequence motifs (cx9C motif) lie at residues 119 to 129 and 139 to 149; these read CEFEWRQFVDC and CNGFNDIFKQC. 2 disulfide bridges follow: Cys119-Cys149 and Cys129-Cys139.

This chain is Hemiasterlin resistant protein 1 (har-1), found in Caenorhabditis elegans.